An 865-amino-acid polypeptide reads, in one-letter code: MKHVRHFIPSLFLSLVHVCLVQANYAPYFFDNGARSTNGNMALLSLSEDTPVGSHVYTLNGTDPEGDPVTYGLTYEAGSRRYFSVDGNLGNVTLIEELDREKEDEIEVIVSISDGLSTVSEKVRILVMDANDESPEFINTPYIVQVPENSPSGSSIFKIEAVDRDTGSGGSITYFLQNIHANKFTIDRHSGVLRIKSGVTLDYEKSRTHFVVVVAKDGGGKLRGDNKVFSATTTVTVNVEDVQDTPPMFIGTPYYGYVYEDTLPGSEVLTVVALDGDRGKPNNIHYCIVNGSEGSFEISNTTGAISVIKSPNQLKKEVYELRVQASEVSPEGDVSAYAFATVTIRVVDLNNHPPTFYGESGPQNRFELTMYEHPPEGEILRGLKITVNDSDQGANAKFNLRLVGPGGIFRVVPLTVLNEAQVTIIVENSAAIDYEKFKVLTFKLLAIEVNTPEKFSSTADIAIRLLDTNDNVPKFSSDYYIARIPENSPGGSNVVAVTATDPDSGLWGEVKYSIYGTGADLFLIHPSTGIIYTQPWAVLDAEVNSKYNFYVKAEDTDGKYSLAEVFITVLDVNDHSPEFNENIQEKTMIIGSPVKIEAIDQDAEEPNNIVDYSIMQADPANVFDIDQSTGEIKLKSYIRSLDIIHNITKNKDCIWSLVVQAKDRGSPSFSTTAVLKIDITEETLHKGPMAAFLMQTKDNPMKALGVLAGVMGIMVLITIMISTAMFWRNKRSNKIMPVRRIIKKRQTQQSRTVRMEWLKFKRPSNAAEKFVVEDDAKSLQNENSNNNVQAAPVPPAAPLPPPPPALAASGNTTAWRVPTVSGSLTPKFINKQLKKRGHSSTHNALVSELKMKFEKRNASMGEPHI.

The N-terminal stretch at 1-23 is a signal peptide; the sequence is MKHVRHFIPSLFLSLVHVCLVQA. The Extracellular portion of the chain corresponds to 24 to 705; it reads NYAPYFFDNG…TKDNPMKALG (682 aa). 6 Cadherin domains span residues 38–137, 138–249, 250–356, 362–475, 476–579, and 571–690; these read NGNM…SPEF, INTP…PPMF, IGTP…PPTF, PQNR…VPKF, SSDY…SPEF, and DVND…GPMA. The chain crosses the membrane as a helical span at residues 706–726; it reads VLAGVMGIMVLITIMISTAMF. Residues 727 to 865 lie on the Cytoplasmic side of the membrane; that stretch reads WRNKRSNKIM…RNASMGEPHI (139 aa). The disordered stretch occupies residues 782 to 810; that stretch reads ENSNNNVQAAPVPPAAPLPPPPPALAASG. Pro residues predominate over residues 792–805; sequence PVPPAAPLPPPPPA.

Its subcellular location is the membrane. Potential calcium-dependent cell-adhesion protein. The sequence is that of Cadherin-related family member 1 (CDHR1) from Gallus gallus (Chicken).